Here is a 205-residue protein sequence, read N- to C-terminus: Small ribosomal subunit protein uS4 (205 aa).

The tract at residues 20-46 is disordered; sequence WGRSKSPVNRREYGPGQHGQRRKGKLS. The region spanning 94-157 is the S4 RNA-binding domain; the sequence is RRLDAVVYRA…RQLTLVLEAS (64 aa).

Belongs to the universal ribosomal protein uS4 family. Part of the 30S ribosomal subunit. Contacts protein S5. The interaction surface between S4 and S5 is involved in control of translational fidelity.

Functionally, one of the primary rRNA binding proteins, it binds directly to 16S rRNA where it nucleates assembly of the body of the 30S subunit. In terms of biological role, with S5 and S12 plays an important role in translational accuracy. The polypeptide is Small ribosomal subunit protein uS4 (Beijerinckia indica subsp. indica (strain ATCC 9039 / DSM 1715 / NCIMB 8712)).